The chain runs to 237 residues: Phosphatidylserine decarboxylase proenzyme (237 aa).

Residue serine 206 is the Schiff-base intermediate with substrate; via pyruvic acid of the active site. Serine 206 carries the post-translational modification Pyruvic acid (Ser); by autocatalysis.

This sequence belongs to the phosphatidylserine decarboxylase family. PSD-A subfamily. As to quaternary structure, heterodimer of a large membrane-associated beta subunit and a small pyruvoyl-containing alpha subunit. It depends on pyruvate as a cofactor. Is synthesized initially as an inactive proenzyme. Formation of the active enzyme involves a self-maturation process in which the active site pyruvoyl group is generated from an internal serine residue via an autocatalytic post-translational modification. Two non-identical subunits are generated from the proenzyme in this reaction, and the pyruvate is formed at the N-terminus of the alpha chain, which is derived from the carboxyl end of the proenzyme. The post-translation cleavage follows an unusual pathway, termed non-hydrolytic serinolysis, in which the side chain hydroxyl group of the serine supplies its oxygen atom to form the C-terminus of the beta chain, while the remainder of the serine residue undergoes an oxidative deamination to produce ammonia and the pyruvoyl prosthetic group on the alpha chain.

The protein localises to the cell membrane. It catalyses the reaction a 1,2-diacyl-sn-glycero-3-phospho-L-serine + H(+) = a 1,2-diacyl-sn-glycero-3-phosphoethanolamine + CO2. The protein operates within phospholipid metabolism; phosphatidylethanolamine biosynthesis; phosphatidylethanolamine from CDP-diacylglycerol: step 2/2. In terms of biological role, catalyzes the formation of phosphatidylethanolamine (PtdEtn) from phosphatidylserine (PtdSer). This Rhodococcus jostii (strain RHA1) protein is Phosphatidylserine decarboxylase proenzyme.